A 303-amino-acid chain; its full sequence is N-acetylmuramic acid 6-phosphate etherase (303 aa).

The region spanning 60 to 223 (ATASLQAGGR…STGVMVKLGK (164 aa)) is the SIS domain. The active-site Proton donor is Glu-88. Glu-119 is a catalytic residue.

This sequence belongs to the GCKR-like family. MurNAc-6-P etherase subfamily. Homodimer.

The enzyme catalyses N-acetyl-D-muramate 6-phosphate + H2O = N-acetyl-D-glucosamine 6-phosphate + (R)-lactate. Its pathway is amino-sugar metabolism; 1,6-anhydro-N-acetylmuramate degradation. It functions in the pathway amino-sugar metabolism; N-acetylmuramate degradation. The protein operates within cell wall biogenesis; peptidoglycan recycling. Functionally, specifically catalyzes the cleavage of the D-lactyl ether substituent of MurNAc 6-phosphate, producing GlcNAc 6-phosphate and D-lactate. Together with AnmK, is also required for the utilization of anhydro-N-acetylmuramic acid (anhMurNAc) either imported from the medium or derived from its own cell wall murein, and thus plays a role in cell wall recycling. This is N-acetylmuramic acid 6-phosphate etherase from Pectobacterium atrosepticum (strain SCRI 1043 / ATCC BAA-672) (Erwinia carotovora subsp. atroseptica).